Consider the following 424-residue polypeptide: Tyrosine--tRNA ligase 1 (424 aa).

An L-tyrosine-binding site is contributed by Tyr-37. Positions 42–51 match the 'HIGH' region motif; it reads PTADSLHLGH. Positions 175 and 179 each coordinate L-tyrosine. Residues 235-239 carry the 'KMSKS' region motif; that stretch reads KFGKT. ATP is bound at residue Lys-238. In terms of domain architecture, S4 RNA-binding spans 357 to 414; that stretch reads ADLQQALVNAGLVPSRGQARTMISSNAVAINGEKQSEPEYLFTDSNRLFDRYTLLRRG.

It belongs to the class-I aminoacyl-tRNA synthetase family. TyrS type 1 subfamily. In terms of assembly, homodimer.

It is found in the cytoplasm. It carries out the reaction tRNA(Tyr) + L-tyrosine + ATP = L-tyrosyl-tRNA(Tyr) + AMP + diphosphate + H(+). In terms of biological role, catalyzes the attachment of tyrosine to tRNA(Tyr) in a two-step reaction: tyrosine is first activated by ATP to form Tyr-AMP and then transferred to the acceptor end of tRNA(Tyr). The sequence is that of Tyrosine--tRNA ligase 1 from Photorhabdus laumondii subsp. laumondii (strain DSM 15139 / CIP 105565 / TT01) (Photorhabdus luminescens subsp. laumondii).